The primary structure comprises 128 residues: Large ribosomal subunit protein uL22 (128 aa).

The protein belongs to the universal ribosomal protein uL22 family. As to quaternary structure, part of the 50S ribosomal subunit.

Its function is as follows. This protein binds specifically to 23S rRNA; its binding is stimulated by other ribosomal proteins, e.g. L4, L17, and L20. It is important during the early stages of 50S assembly. It makes multiple contacts with different domains of the 23S rRNA in the assembled 50S subunit and ribosome. In terms of biological role, the globular domain of the protein is located near the polypeptide exit tunnel on the outside of the subunit, while an extended beta-hairpin is found that lines the wall of the exit tunnel in the center of the 70S ribosome. This Prochlorococcus marinus (strain MIT 9301) protein is Large ribosomal subunit protein uL22.